The following is a 383-amino-acid chain: Glutaminyl-peptide cyclotransferase-like protein (383 aa).

Residues 33–53 (VQFLPLLLLALAMGLAFYIVW) traverse the membrane as a helical segment. A disulfide bridge links Cys-168 with Cys-192. Residue Asp-187 coordinates Zn(2+). Glu-226 (proton acceptor) is an active-site residue. Glu-227 serves as a coordination point for Zn(2+). Asp-270 serves as the catalytic Proton acceptor. His-352 is a Zn(2+) binding site.

Belongs to the glutaminyl-peptide cyclotransferase family. Detected in thalamus, hippocampus, brain cortex, cerebellum, kidney, lung and liver, and at low levels in heart and spleen.

The protein resides in the golgi apparatus membrane. It carries out the reaction N-terminal L-glutaminyl-[peptide] = N-terminal 5-oxo-L-prolyl-[peptide] + NH4(+). Responsible for the biosynthesis of pyroglutamyl peptides. This chain is Glutaminyl-peptide cyclotransferase-like protein (Qpctl), found in Mus musculus (Mouse).